Here is a 149-residue protein sequence, read N- to C-terminus: UPF0178 protein SERP0336 (149 aa).

Belongs to the UPF0178 family.

The polypeptide is UPF0178 protein SERP0336 (Staphylococcus epidermidis (strain ATCC 35984 / DSM 28319 / BCRC 17069 / CCUG 31568 / BM 3577 / RP62A)).